The following is a 644-amino-acid chain: Phosphatidylinositol polyphosphate 5-phosphatase type IV (644 aa).

Positions 1–193 (MPSKAENLRP…RLPSLLPPRP (193 aa)) are disordered. A run of 8 repeats spans residues 10–13 (PSEP), 15–18 (PQPP), 28–31 (PGAP), 39–42 (PPDA), 55–58 (PATP), 69–71 (PIA), 72–74 (PRP), and 75–78 (PARP). The segment at 10–242 (PSEPAPQPPE…SLGPGRPRSP (233 aa)) is 13 X 4 AA repeats of P-X-X-P. Positions 78–90 (PRLERALSLDDKG) are enriched in basic and acidic residues. Ser-99 carries the phosphoserine modification. Over residues 107–118 (NGTSPSRGSVQS) the composition is skewed to polar residues. The stretch at 121–124 (PGAP) is repeat 9. Positions 152–163 (GSPSSGGNPLSG) are enriched in low complexity. 4 consecutive repeat copies span residues 169 to 172 (PNLP), 183 to 185 (PRL), 190 to 193 (PPRP), and 236 to 239 (PGRP). Phosphoserine occurs at positions 241 and 256. The residue at position 641 (Cys-641) is a Cysteine methyl ester. A lipid anchor (S-farnesyl cysteine) is attached at Cys-641. Positions 642 to 644 (SVS) are cleaved as a propeptide — removed in mature form.

It belongs to the inositol 1,4,5-trisphosphate 5-phosphatase type IV family. As to quaternary structure, interacts (when prenylated) with PDE6D; this is important for normal location in cilia. Detected in brain, heart, pancreas, testis and spleen.

It localises to the cytoplasm. It is found in the cytoskeleton. The protein localises to the cilium axoneme. The protein resides in the golgi apparatus. Its subcellular location is the golgi stack membrane. It localises to the cell membrane. It is found in the cell projection. The protein localises to the ruffle. The protein resides in the nucleus. The catalysed reaction is a 1,2-diacyl-sn-glycero-3-phospho-(1D-myo-inositol-4,5-bisphosphate) + H2O = a 1,2-diacyl-sn-glycero-3-phospho-(1D-myo-inositol 4-phosphate) + phosphate. It carries out the reaction a 1,2-diacyl-sn-glycero-3-phospho-(1D-myo-inositol-3,4,5-trisphosphate) + H2O = a 1,2-diacyl-sn-glycero-3-phospho-(1D-myo-inositol-3,4-bisphosphate) + phosphate. It catalyses the reaction a 1,2-diacyl-sn-glycero-3-phospho-(1D-myo-inositol-3,5-bisphosphate) + H2O = a 1,2-diacyl-sn-glycero-3-phospho-(1D-myo-inositol-3-phosphate) + phosphate. With respect to regulation, active in the presence of octyl-glucoside or Triton X-100, but completely inhibited by CTAB. In terms of biological role, phosphatidylinositol (PtdIns) phosphatase that specifically hydrolyzes the 5-phosphate of phosphatidylinositol-3,4,5-trisphosphate (PtdIns(3,4,5)P3), phosphatidylinositol 4,5-bisphosphate (PtdIns(4,5)P2) and phosphatidylinositol 3,5-bisphosphate (PtdIns(3,5)P2). Specific for lipid substrates, inactive towards water soluble inositol phosphates. Plays an essential role in the primary cilium by controlling ciliary growth and phosphoinositide 3-kinase (PI3K) signaling and stability. The sequence is that of Phosphatidylinositol polyphosphate 5-phosphatase type IV (INPP5E) from Homo sapiens (Human).